A 269-amino-acid polypeptide reads, in one-letter code: uncharacterized protein (269 aa).

5 consecutive transmembrane segments (helical) span residues 65-85 (FSLFLTIVMIINLLFGSLFVM), 156-176 (VTSVLLAACRVCLNLMLISMV), 182-202 (YTRILLCIISYGMMIFVWLGF), 206-226 (MMSFMLATWLFAYNIVLNDFW), and 242-262 (TLSAIGGLLLLIHTGPGEFSF). The Di-lysine motif motif lies at 266 to 269 (KKKW).

The protein belongs to the SURF4 family.

It localises to the membrane. This is an uncharacterized protein from Caenorhabditis elegans.